Here is a 611-residue protein sequence, read N- to C-terminus: Procollagen galactosyltransferase 1-B (611 aa).

Positions 1-24 are cleaved as a signal peptide; sequence MSQAGVERLLKGLQILVLVLRLSA. N-linked (GlcNAc...) asparagine glycans are attached at residues asparagine 85, asparagine 173, asparagine 370, asparagine 373, and asparagine 568. Over residues 576-591 the composition is skewed to basic and acidic residues; the sequence is DRAKSRKTHQQEKLRS. The interval 576–611 is disordered; that stretch reads DRAKSRKTHQQEKLRSEALNTPSMGSPFDNTARDEL. The Prevents secretion from ER motif lies at 608–611; that stretch reads RDEL.

This sequence belongs to the glycosyltransferase 25 family.

Its subcellular location is the endoplasmic reticulum lumen. It catalyses the reaction (5R)-5-hydroxy-L-lysyl-[collagen] + UDP-alpha-D-galactose = (5R)-5-O-(beta-D-galactosyl)-5-hydroxy-L-lysyl-[collagen] + UDP + H(+). Functionally, beta-galactosyltransferase that transfers beta-galactose to hydroxylysine residues of type I collagen. By acting on collagen glycosylation, facilitates the formation of collagen triple helix. The protein is Procollagen galactosyltransferase 1-B (colgalt1-b) of Xenopus laevis (African clawed frog).